A 279-amino-acid chain; its full sequence is Phosphatidylglycerol--prolipoprotein diacylglyceryl transferase (279 aa).

The next 4 helical transmembrane spans lie at 4–24, 44–64, 76–96, and 104–124; these read IGPLAIRWYGVLLTLAIFLGY, VVFWAVVFGVVGARLGYVLTS, LYIWHGGLSFHGAILGGGLTF, and GYPLWPYLDAATPGVALGIVA. Arginine 126 lines the a 1,2-diacyl-sn-glycero-3-phospho-(1'-sn-glycerol) pocket. The next 3 helical transmembrane spans lie at 182-202, 206-226, and 245-265; these read LTQVYGAVVGLILLFLSLYWL, PFYGYAFWQFVLWYSVLRSVL, and LGIGLFTATQVVSLPLVLLSL.

Belongs to the Lgt family.

The protein localises to the cell inner membrane. It catalyses the reaction L-cysteinyl-[prolipoprotein] + a 1,2-diacyl-sn-glycero-3-phospho-(1'-sn-glycerol) = an S-1,2-diacyl-sn-glyceryl-L-cysteinyl-[prolipoprotein] + sn-glycerol 1-phosphate + H(+). It functions in the pathway protein modification; lipoprotein biosynthesis (diacylglyceryl transfer). Catalyzes the transfer of the diacylglyceryl group from phosphatidylglycerol to the sulfhydryl group of the N-terminal cysteine of a prolipoprotein, the first step in the formation of mature lipoproteins. The sequence is that of Phosphatidylglycerol--prolipoprotein diacylglyceryl transferase from Thermus thermophilus (strain ATCC 27634 / DSM 579 / HB8).